We begin with the raw amino-acid sequence, 386 residues long: Succinate--CoA ligase [ADP-forming] subunit beta (386 aa).

The region spanning 9 to 243 is the ATP-grasp domain; it reads KQLFRKYSIP…PAEDDPAEAE (235 aa). ATP is bound by residues Lys-45, 52–54, Glu-98, Val-101, and Glu-106; that span reads GRG. Positions 198 and 212 each coordinate Mg(2+). Substrate contacts are provided by residues Asn-263 and 320–322; that span reads GIL.

It belongs to the succinate/malate CoA ligase beta subunit family. Heterotetramer of two alpha and two beta subunits. It depends on Mg(2+) as a cofactor.

The catalysed reaction is succinate + ATP + CoA = succinyl-CoA + ADP + phosphate. The enzyme catalyses GTP + succinate + CoA = succinyl-CoA + GDP + phosphate. It participates in carbohydrate metabolism; tricarboxylic acid cycle; succinate from succinyl-CoA (ligase route): step 1/1. In terms of biological role, succinyl-CoA synthetase functions in the citric acid cycle (TCA), coupling the hydrolysis of succinyl-CoA to the synthesis of either ATP or GTP and thus represents the only step of substrate-level phosphorylation in the TCA. The beta subunit provides nucleotide specificity of the enzyme and binds the substrate succinate, while the binding sites for coenzyme A and phosphate are found in the alpha subunit. The chain is Succinate--CoA ligase [ADP-forming] subunit beta from Desulfotalea psychrophila (strain LSv54 / DSM 12343).